We begin with the raw amino-acid sequence, 200 residues long: Recombination protein RecR (200 aa).

A C4-type zinc finger spans residues 57-72 (CDSCQNFSDTEICQIC). One can recognise a Toprim domain in the interval 80-175 (GTLCVVESPS…LITRLAHGIP (96 aa)).

It belongs to the RecR family.

In terms of biological role, may play a role in DNA repair. It seems to be involved in an RecBC-independent recombinational process of DNA repair. It may act with RecF and RecO. This chain is Recombination protein RecR, found in Marinobacter nauticus (strain ATCC 700491 / DSM 11845 / VT8) (Marinobacter aquaeolei).